Here is a 714-residue protein sequence, read N- to C-terminus: Fimbrin-3 (714 aa).

Residues 7 to 55 (VIVSDPWLQSQLTQVELRSLNSKFVALKNQSGKVTLEDLPSVLVKVKSL) enclose the EF-hand domain. Calponin-homology (CH) domains lie at 124–241 (QSEK…KIQL), 269–372 (LPPE…HERN), 393–499 (CRDE…RTHM), and 514–622 (DMTD…YWSL). 2 actin-binding regions span residues 124-372 (QSEK…HERN) and 393-622 (CRDE…YWSL). Residues 628 to 662 (SSESSSSSSDSSSTHSTTTTCTSTCTSTDASPAPS) are compositionally biased toward low complexity. Residues 628 to 694 (SSESSSSSSD…NEVSSLTIEE (67 aa)) form a disordered region. A compositionally biased stretch (polar residues) spans 670–680 (SSLNGEVSSLT). Acidic residues predominate over residues 681–694 (IEEDNEVSSLTIEE).

As to quaternary structure, interacts with F-actin.

It is found in the cytoplasm. Its subcellular location is the cytoskeleton. In terms of biological role, cross-links actin filaments (F-actin). Stabilizes and prevents F-actin depolymerization mediated by profilin. May regulate actin cytoarchitecture, cell cycle, cell division, cell elongation and cytoplasmic tractus. This chain is Fimbrin-3, found in Arabidopsis thaliana (Mouse-ear cress).